The sequence spans 217 residues: Ribosomal RNA large subunit methyltransferase E (217 aa).

Gly-71, Trp-73, Asp-91, Asp-107, and Asp-132 together coordinate S-adenosyl-L-methionine. The Proton acceptor role is filled by Lys-172.

It belongs to the class I-like SAM-binding methyltransferase superfamily. RNA methyltransferase RlmE family.

The protein resides in the cytoplasm. It catalyses the reaction uridine(2552) in 23S rRNA + S-adenosyl-L-methionine = 2'-O-methyluridine(2552) in 23S rRNA + S-adenosyl-L-homocysteine + H(+). Functionally, specifically methylates the uridine in position 2552 of 23S rRNA at the 2'-O position of the ribose in the fully assembled 50S ribosomal subunit. The polypeptide is Ribosomal RNA large subunit methyltransferase E (Psychromonas ingrahamii (strain DSM 17664 / CCUG 51855 / 37)).